Here is a 338-residue protein sequence, read N- to C-terminus: Glycerol-3-phosphate dehydrogenase [NAD(P)+] (338 aa).

3 residues coordinate NADPH: S13, W14, and K108. 3 residues coordinate sn-glycerol 3-phosphate: K108, G139, and S141. Position 143 (A143) interacts with NADPH. Sn-glycerol 3-phosphate-binding residues include K194, D247, S257, R258, and N259. K194 acts as the Proton acceptor in catalysis. An NADPH-binding site is contributed by R258. NADPH-binding residues include V282 and E284.

The protein resides in the cytoplasm. The enzyme catalyses sn-glycerol 3-phosphate + NAD(+) = dihydroxyacetone phosphate + NADH + H(+). The catalysed reaction is sn-glycerol 3-phosphate + NADP(+) = dihydroxyacetone phosphate + NADPH + H(+). Its pathway is membrane lipid metabolism; glycerophospholipid metabolism. In terms of biological role, catalyzes the reduction of the glycolytic intermediate dihydroxyacetone phosphate (DHAP) to sn-glycerol 3-phosphate (G3P), the key precursor for phospholipid synthesis. The polypeptide is Glycerol-3-phosphate dehydrogenase [NAD(P)+] (Streptococcus pyogenes serotype M6 (strain ATCC BAA-946 / MGAS10394)).